Consider the following 388-residue polypeptide: MSTLQAVKYSRGNLEVLDQLRLPHEFHYDNVSTSEEAFDCIRSMRVRGAPAIAIVASLAHAVELHNGSCRATSSEEVISYIHGRLDYLKESRPTAVDLTNAINQLKARTQELAGQDRDAIIKAYIEEAENILEKDLKTNLSIGDHGADWLKDVAQAGPDGKISVLTHCNTGSLATSGHGTALGIIRTLQSRGWLNHAYCTETRPYNQGSRLTAFELVFEKIPSTLITDSMAAALFALQKETMNISAVIVGADRVVRNGDTANKIGTYQLAVLAKHHGIKFIVAAPTTSIDLETMTGEGIHIEERKREELTQISGATVGSDGSVDVAKTVRVATADQRIDVWNPAFDVTPHDLIDAVVTEKGAVVKGTNGEFDFSHVMPERWARLVGQQ.

The active-site Proton donor is aspartate 252.

It belongs to the eIF-2B alpha/beta/delta subunits family. MtnA subfamily.

Its subcellular location is the cytoplasm. It is found in the nucleus. The enzyme catalyses 5-(methylsulfanyl)-alpha-D-ribose 1-phosphate = 5-(methylsulfanyl)-D-ribulose 1-phosphate. It functions in the pathway amino-acid biosynthesis; L-methionine biosynthesis via salvage pathway; L-methionine from S-methyl-5-thio-alpha-D-ribose 1-phosphate: step 1/6. Functionally, catalyzes the interconversion of methylthioribose-1-phosphate (MTR-1-P) into methylthioribulose-1-phosphate (MTRu-1-P). The polypeptide is Methylthioribose-1-phosphate isomerase (Verticillium alfalfae (strain VaMs.102 / ATCC MYA-4576 / FGSC 10136) (Verticillium wilt of alfalfa)).